Here is a 527-residue protein sequence, read N- to C-terminus: Peptide chain release factor 3 (527 aa).

In terms of domain architecture, tr-type G spans 9 to 277 (AKRRTFAIIS…AVVDWAPKPL (269 aa)). GTP contacts are provided by residues 18–25 (SHPDAGKT), 86–90 (DTPGH), and 140–143 (NKLD).

This sequence belongs to the TRAFAC class translation factor GTPase superfamily. Classic translation factor GTPase family. PrfC subfamily.

It localises to the cytoplasm. Its function is as follows. Increases the formation of ribosomal termination complexes and stimulates activities of RF-1 and RF-2. It binds guanine nucleotides and has strong preference for UGA stop codons. It may interact directly with the ribosome. The stimulation of RF-1 and RF-2 is significantly reduced by GTP and GDP, but not by GMP. The chain is Peptide chain release factor 3 from Stutzerimonas stutzeri (strain A1501) (Pseudomonas stutzeri).